The primary structure comprises 154 residues: 17.6 kDa class I heat shock protein (154 aa).

The region spanning 40-154 is the sHSP domain; it reads ETSAFANTRI…PDVKSIEISG (115 aa).

Belongs to the small heat shock protein (HSP20) family. As to quaternary structure, forms oligomeric structures.

It localises to the cytoplasm. The protein is 17.6 kDa class I heat shock protein of Solanum peruvianum (Peruvian tomato).